Reading from the N-terminus, the 509-residue chain is Scavenger receptor class B member 1 (509 aa).

The Cytoplasmic portion of the chain corresponds to 1–11 (MGSRSRARQVA). A helical transmembrane segment spans residues 12–32 (AALGFVGLLLAALGAVMIVMV). Residues 33 to 439 (PSIIKQQVLK…FYTQLVLMPK (407 aa)) are Extracellular-facing. Residues asparagine 102, asparagine 108, asparagine 173, asparagine 212, asparagine 255, asparagine 310, asparagine 330, and asparagine 383 are each glycosylated (N-linked (GlcNAc...) asparagine). An intrachain disulfide couples cysteine 251 to cysteine 384. The chain crosses the membrane as a helical span at residues 440-460 (VLHYAQYVLLALGCVLLFIPI). At 461-509 (VYQIRSQEKCYLFWSSSKKGSKDKEAIQAYSESLMTPAPKGTVLQEARL) the chain is on the cytoplasmic side.

Belongs to the CD36 family. As to quaternary structure, the C-terminal region binds to PDZK1. Post-translationally, N-glycosylated. In terms of processing, the six cysteines of the extracellular domain are all involved in intramolecular disulfide bonds.

The protein localises to the cell membrane. It localises to the membrane. It is found in the caveola. Functionally, receptor for different ligands such as phospholipids, cholesterol ester, lipoproteins, phosphatidylserine and apoptotic cells. Receptor for HDL, mediating selective uptake of cholesteryl ether and HDL-dependent cholesterol efflux. Also facilitates the flux of free and esterified cholesterol between the cell surface and apoB-containing lipoproteins and modified lipoproteins, although less efficiently than HDL. May be involved in the phagocytosis of apoptotic cells, via its phosphatidylserine binding activity. The sequence is that of Scavenger receptor class B member 1 (SCARB1) from Sus scrofa (Pig).